A 425-amino-acid polypeptide reads, in one-letter code: D-tagatose 6-phosphate 4-epimerase (425 aa).

It belongs to the GatZ/KbaZ family.

The catalysed reaction is keto-D-tagatose 6-phosphate = keto-D-fructose 6-phosphate. It functions in the pathway carbohydrate metabolism. Functionally, involved in galactitol and D-altritol catabolism. Catalyzes the epimerization of D-tagatose 6-phosphate to D-fructose 6-phosphate. In Agrobacterium fabrum (strain C58 / ATCC 33970) (Agrobacterium tumefaciens (strain C58)), this protein is D-tagatose 6-phosphate 4-epimerase.